We begin with the raw amino-acid sequence, 96 residues long: Muconolactone Delta-isomerase 2 (96 aa).

This sequence belongs to the muconolactone Delta-isomerase family. In terms of assembly, homodecamer.

The catalysed reaction is (S)-muconolactone = (4,5-dihydro-5-oxofuran-2-yl)-acetate. The protein operates within aromatic compound metabolism; beta-ketoadipate pathway; 5-oxo-4,5-dihydro-2-furylacetate from catechol: step 3/3. The chain is Muconolactone Delta-isomerase 2 (catC2) from Acinetobacter lwoffii.